The primary structure comprises 687 residues: Chloride channel protein ClC-Kb (687 aa).

The Cytoplasmic segment spans residues 1–50 (MEELVGLREGASKKPVPLQELWGPCPRIRRNIQGGLEWLKERLFRVGEDW). Transmembrane regions (helical) follow at residues 51 to 82 (YFLV…KWLY) and 91 to 111 (LRYL…SGFS). The segment at residues 116-127 (PSSGGSGIPEVK) is an intramembrane region (helical). Ser121 serves as a coordination point for chloride. The next 2 helical transmembrane spans lie at 141-160 (IKNF…TGST) and 161-180 (IFLG…AAYL). The helical intramembrane region spans 203 to 224 (AGAAVGVATVFAAPISGVLFSI). Residues 236–255 (YWRGFFAATCGAFMFHLLAV) form a helical membrane-spanning segment. Ca(2+)-binding residues include Glu259, Glu261, Asp278, and Glu281. A run of 2 helical transmembrane segments spans residues 282-310 (IFFF…LFFL) and 325-342 (PLYS…TYPP). Positions 349–360 (ASRLSMSEHLET) form an intramembrane region, helical. 2 helical membrane-spanning segments follow: residues 400–420 (GTLV…TTIP) and 421–440 (IPAG…GRLF). Phe426 contributes to the chloride binding site. Residues 464 to 496 (GAYALAGAAAFSGAVTHTLSTALLAFEVTGQLV) constitute an intramembrane region (helical). Residues 500 to 520 (PVLMAVLAANAISQSFQPSFY) traverse the membrane as a helical segment. Topologically, residues 521 to 687 (DGTIIVKKLP…STLTNPPAPK (167 aa)) are cytoplasmic. CBS domains lie at 551 to 609 (MNCA…EPAS) and 626 to 687 (CPTQ…PAPK).

This sequence belongs to the chloride channel (TC 2.A.49) family. CLCNKB subfamily. As to quaternary structure, homodimer. Interacts with BSND. In terms of processing, N-glycosylated. As to expression, specifically expressed in the kidney, predominantly in the outer medulla and cortex. All nephron segments expressing BSND also express CLCNK proteins.

It is found in the basolateral cell membrane. It carries out the reaction chloride(in) = chloride(out). The enzyme catalyses iodide(out) = iodide(in). The catalysed reaction is nitrate(in) = nitrate(out). It catalyses the reaction bromide(in) = bromide(out). In terms of biological role, anion-selective channel permeable to small monovalent anions with ion selectivity for chloride &gt; bromide &gt; nitrate &gt; iodide. Forms a homodimeric channel where each subunit has its own ion conduction pathway. May conduct double-barreled currents controlled by two types of gates, two fast gates that control each subunit independently and a slow common gate that opens and shuts off both subunits simultaneously. Assembles with the regulatory subunit BSND/Barttin for sorting at the basolateral plasma membrane domain and functional switch to the ion conducting state. CLCNKB:BSND channels display mostly a linear current-voltage relationship controlled by common gate. Mediates chloride conductance along nephron segments, namely the thick ascending limb of Henle's loop, convoluted tubule and the collecting duct, contributing to the maintenance of systemic acid-base and electrolyte homeostasis. Conducts chloride currents in the stria vascularis of the inner ear to establish the endocochlear potential necessary for normal hearing. This chain is Chloride channel protein ClC-Kb, found in Mus musculus (Mouse).